A 1028-amino-acid polypeptide reads, in one-letter code: Pro-apoptotic serine protease nma111 (1028 aa).

The disordered stretch occupies residues 1 to 45 (MDMSGESSIKRRRSSIAASAERPAKHLRPENSTLTPGDATPANGT). Residues 82-266 (VVSIHFCQTC…AATDYFLPLD (185 aa)) are serine protease. Residues His-120, Asp-151, and Ser-233 each act as charge relay system in the active site. PDZ domains lie at 289 to 374 (QWIL…LLVQ) and 876 to 957 (VFCG…VTFD).

Belongs to the peptidase S1C family.

The protein resides in the nucleus. In terms of biological role, nuclear serine protease which mediates apoptosis. This Aspergillus clavatus (strain ATCC 1007 / CBS 513.65 / DSM 816 / NCTC 3887 / NRRL 1 / QM 1276 / 107) protein is Pro-apoptotic serine protease nma111 (nma111).